A 286-amino-acid chain; its full sequence is MLILETVPLLRREVRRWRQEGKRIALVPTMGNLHDGHMALVNEAHARADVVIVSVFVNPMQFDRPDDLARYPRTLQEDCEQLNRHGVDLVFAPAAEEIYPQGVSQQTYVDVPALSSILEGASRPGHFRGVATIVSKLFNLVQPDLACFGEKDYQQLQLIRKLVADMGYGTEIVGVPIVRGEDGLALSSRNGYLDSDERRLAPRLYNIMMQLASQLENGERDLEALLEQTASRLRQAGFCPDELFIRDADTLGDVNVDTRTAIVLMAAWLGQARLIDNVRIAFNADA.

30–37 (MGNLHDGH) is an ATP binding site. Histidine 37 serves as the catalytic Proton donor. Glutamine 61 provides a ligand contact to (R)-pantoate. Glutamine 61 lines the beta-alanine pocket. 149–152 (GEKD) contacts ATP. Residue glutamine 155 coordinates (R)-pantoate. ATP contacts are provided by residues valine 178 and 186 to 189 (LSSR).

The protein belongs to the pantothenate synthetase family. As to quaternary structure, homodimer.

The protein resides in the cytoplasm. The enzyme catalyses (R)-pantoate + beta-alanine + ATP = (R)-pantothenate + AMP + diphosphate + H(+). It participates in cofactor biosynthesis; (R)-pantothenate biosynthesis; (R)-pantothenate from (R)-pantoate and beta-alanine: step 1/1. Catalyzes the condensation of pantoate with beta-alanine in an ATP-dependent reaction via a pantoyl-adenylate intermediate. This is Pantothenate synthetase from Edwardsiella ictaluri (strain 93-146).